The sequence spans 231 residues: S-norcoclaurine synthase 2 (231 aa).

Position 107-109 (Tyr107–Glu109) interacts with dopamine. The active-site Proton donor is Lys121. Asp140 serves as a coordination point for (4-hydroxyphenyl)acetaldehyde. Residues Leu210–Pro230 traverse the membrane as a helical segment.

This sequence belongs to the BetVI family. Expressed in roots, stems and leaves. Detected in flower buds and germinating seeds. Low expression in carpels. Restricted to sieve elements of the phloem adjacent or proximal to laticifers.

The protein localises to the endoplasmic reticulum membrane. Its subcellular location is the vacuole membrane. It catalyses the reaction (4-hydroxyphenyl)acetaldehyde + dopamine = (S)-norcoclaurine + H2O. It participates in alkaloid biosynthesis; (S)-reticuline biosynthesis. With respect to regulation, activity doubles within 5 hours of elicitor treatment and continues to increase for at least 80 hours. In terms of biological role, involved in the biosynthesis of (S)-coclaurine, the common precursor of all benzylisoquinoline alkaloids such as morphine, sanguinarine, codeine or papaverine. Condenses dopamine and 4-hydroxyphenylacetaldehyde. The polypeptide is S-norcoclaurine synthase 2 (Papaver somniferum (Opium poppy)).